The primary structure comprises 372 residues: Glutamate 5-kinase (372 aa).

ATP is bound at residue Lys14. 3 residues coordinate substrate: Ser54, Asp141, and Asn153. 173-174 provides a ligand contact to ATP; that stretch reads TD. The region spanning 280 to 358 is the PUA domain; the sequence is RGHVVIDAGA…GEIESVLGYM (79 aa).

This sequence belongs to the glutamate 5-kinase family.

The protein localises to the cytoplasm. It carries out the reaction L-glutamate + ATP = L-glutamyl 5-phosphate + ADP. It participates in amino-acid biosynthesis; L-proline biosynthesis; L-glutamate 5-semialdehyde from L-glutamate: step 1/2. In terms of biological role, catalyzes the transfer of a phosphate group to glutamate to form L-glutamate 5-phosphate. This chain is Glutamate 5-kinase, found in Burkholderia multivorans (strain ATCC 17616 / 249).